Consider the following 40-residue polypeptide: Photosystem II reaction center protein J (40 aa).

The chain crosses the membrane as a helical span at residues 8 to 28 (IPLWVVATIAGLGVITVVGIF).

This sequence belongs to the PsbJ family. PSII is composed of 1 copy each of membrane proteins PsbA, PsbB, PsbC, PsbD, PsbE, PsbF, PsbH, PsbI, PsbJ, PsbK, PsbL, PsbM, PsbT, PsbX, PsbY, PsbZ, Psb30/Ycf12, peripheral proteins PsbO, CyanoQ (PsbQ), PsbU, PsbV and a large number of cofactors. It forms dimeric complexes.

It is found in the cellular thylakoid membrane. Functionally, one of the components of the core complex of photosystem II (PSII). PSII is a light-driven water:plastoquinone oxidoreductase that uses light energy to abstract electrons from H(2)O, generating O(2) and a proton gradient subsequently used for ATP formation. It consists of a core antenna complex that captures photons, and an electron transfer chain that converts photonic excitation into a charge separation. The chain is Photosystem II reaction center protein J from Trichormus variabilis (strain ATCC 29413 / PCC 7937) (Anabaena variabilis).